A 106-amino-acid chain; its full sequence is NADH-quinone oxidoreductase subunit K (106 aa).

3 consecutive transmembrane segments (helical) span residues 8 to 28 (IGIE…IFGV), 35 to 55 (IIMF…FVAF), and 66 to 86 (VFVF…LAIL).

This sequence belongs to the complex I subunit 4L family. NDH-1 is composed of 14 different subunits. Subunits NuoA, H, J, K, L, M, N constitute the membrane sector of the complex.

Its subcellular location is the cell inner membrane. The catalysed reaction is a quinone + NADH + 5 H(+)(in) = a quinol + NAD(+) + 4 H(+)(out). Functionally, NDH-1 shuttles electrons from NADH, via FMN and iron-sulfur (Fe-S) centers, to quinones in the respiratory chain. The immediate electron acceptor for the enzyme in this species is believed to be a menaquinone. Couples the redox reaction to proton translocation (for every two electrons transferred, four hydrogen ions are translocated across the cytoplasmic membrane), and thus conserves the redox energy in a proton gradient. This Flavobacterium psychrophilum (strain ATCC 49511 / DSM 21280 / CIP 103535 / JIP02/86) protein is NADH-quinone oxidoreductase subunit K.